The primary structure comprises 649 residues: Macrolide export ATP-binding/permease protein MacB 1 (649 aa).

The ABC transporter domain maps to 5-243; that stretch reads LELEGIRRSY…AAAELMSLTP (239 aa). 41–48 is an ATP binding site; it reads GASGSGKS. The next 5 membrane-spanning stretches (helical) occupy residues 274–294, 420–440, 524–544, 578–598, and 608–628; these read ALTM…LVVG, VVGQ…VVAE, LFLT…VMNI, VLVC…IGLI, and IAFP…IGVV.

Belongs to the ABC transporter superfamily. Macrolide exporter (TC 3.A.1.122) family. In terms of assembly, homodimer. Part of the tripartite efflux system MacAB-TolC, which is composed of an inner membrane transporter, MacB, a periplasmic membrane fusion protein, MacA, and an outer membrane component, TolC. The complex forms a large protein conduit and can translocate molecules across both the inner and outer membranes. Interacts with MacA.

It localises to the cell inner membrane. Functionally, part of the tripartite efflux system MacAB-TolC. MacB is a non-canonical ABC transporter that contains transmembrane domains (TMD), which form a pore in the inner membrane, and an ATP-binding domain (NBD), which is responsible for energy generation. Confers resistance against macrolides. The chain is Macrolide export ATP-binding/permease protein MacB 1 from Yersinia pestis bv. Antiqua (strain Antiqua).